A 582-amino-acid chain; its full sequence is Protein NRT1/ PTR FAMILY 5.2 (582 aa).

The next 11 helical transmembrane spans lie at 77-97 (WVGT…ALLG), 100-120 (ITFV…TLSV), 141-161 (ASVL…IGTG), 189-209 (FFNW…TVLV), 217-237 (WTLG…IFLL), 334-354 (PVLF…TLFV), 370-390 (IPPA…IVLY), 408-428 (ITLL…MIVA), 452-472 (LPLT…ADSF), 493-515 (GTSY…LSTV), and 538-558 (YYYL…LVVV).

This sequence belongs to the major facilitator superfamily. Proton-dependent oligopeptide transporter (POT/PTR) (TC 2.A.17) family. As to expression, expressed in roots. Detected in shoots, leaves and flowers.

The protein localises to the membrane. Its function is as follows. Peptide transporter involved in stress tolerance in seeds during germination and in defense against virulent bacterial pathogens. In Arabidopsis thaliana (Mouse-ear cress), this protein is Protein NRT1/ PTR FAMILY 5.2 (NPF5.2).